A 147-amino-acid chain; its full sequence is D-aminoacyl-tRNA deacylase (147 aa).

Positions 137–138 match the Gly-cisPro motif, important for rejection of L-amino acids motif; that stretch reads GP.

This sequence belongs to the DTD family. Homodimer.

It localises to the cytoplasm. The catalysed reaction is glycyl-tRNA(Ala) + H2O = tRNA(Ala) + glycine + H(+). It catalyses the reaction a D-aminoacyl-tRNA + H2O = a tRNA + a D-alpha-amino acid + H(+). In terms of biological role, an aminoacyl-tRNA editing enzyme that deacylates mischarged D-aminoacyl-tRNAs. Also deacylates mischarged glycyl-tRNA(Ala), protecting cells against glycine mischarging by AlaRS. Acts via tRNA-based rather than protein-based catalysis; rejects L-amino acids rather than detecting D-amino acids in the active site. By recycling D-aminoacyl-tRNA to D-amino acids and free tRNA molecules, this enzyme counteracts the toxicity associated with the formation of D-aminoacyl-tRNA entities in vivo and helps enforce protein L-homochirality. In Acinetobacter baumannii (strain ATCC 17978 / DSM 105126 / CIP 53.77 / LMG 1025 / NCDC KC755 / 5377), this protein is D-aminoacyl-tRNA deacylase.